A 109-amino-acid chain; its full sequence is Large ribosomal subunit protein P1C (109 aa).

The segment covering 68–83 (ASAPTAAGAGAAAPAE) has biased composition (low complexity). The interval 68 to 109 (ASAPTAAGAGAAAPAEAAEEEKKEEAKEEEESDEDMGFGLFD) is disordered. Over residues 94–103 (KEEEESDEDM) the composition is skewed to acidic residues. Phosphoserine is present on Ser99.

Belongs to the eukaryotic ribosomal protein P1/P2 family. As to quaternary structure, component of the large ribosomal subunit (LSU). Mature yeast ribosomes consist of a small (40S) and a large (60S) subunit. The 40S small subunit contains 1 molecule of ribosomal RNA (18S rRNA) and at least 33 different proteins. The large 60S subunit contains 3 rRNA molecules (25S, 5.8S and 5S rRNA) and at least 46 different proteins. The acidic ribosomal P-proteins form the stalk structure of the 60S subunit. They are organized as a pentameric complex in which uL10/P0 interacts with 2 heterodimers of P1 and P2 proteins.

Its subcellular location is the cytoplasm. Component of the ribosome, a large ribonucleoprotein complex responsible for the synthesis of proteins in the cell. The small ribosomal subunit (SSU) binds messenger RNAs (mRNAs) and translates the encoded message by selecting cognate aminoacyl-transfer RNA (tRNA) molecules. The large subunit (LSU) contains the ribosomal catalytic site termed the peptidyl transferase center (PTC), which catalyzes the formation of peptide bonds, thereby polymerizing the amino acids delivered by tRNAs into a polypeptide chain. The nascent polypeptides leave the ribosome through a tunnel in the LSU and interact with protein factors that function in enzymatic processing, targeting, and the membrane insertion of nascent chains at the exit of the ribosomal tunnel. The protein is Large ribosomal subunit protein P1C (rpp103) of Schizosaccharomyces pombe (strain 972 / ATCC 24843) (Fission yeast).